Here is a 129-residue protein sequence, read N- to C-terminus: uncharacterized protein (129 aa).

Disordered regions lie at residues methionine 1–histidine 57 and proline 87–tryptophan 129. Positions serine 10–glycine 20 are enriched in basic and acidic residues. Over residues proline 87–serine 99 the composition is skewed to low complexity.

This is an uncharacterized protein from Homo sapiens (Human).